A 288-amino-acid polypeptide reads, in one-letter code: Phenazine biosynthesis-like domain-containing protein 1 (288 aa).

Residue glutamate 46 is part of the active site.

It belongs to the PhzF family.

In Mus musculus (Mouse), this protein is Phenazine biosynthesis-like domain-containing protein 1 (Pbld1).